The following is a 2399-amino-acid chain: Protein DOP1A (2399 aa).

Disordered stretches follow at residues 556–598, 619–660, 1105–1124, 1166–1188, 1234–1263, and 1279–1308; these read PSGQ…SSES, NGQG…GAAG, SDSGCSQSSAGDNFSYEVDP, SVTSELEIESLQTKSSDLDPGKE, SPCISGTAQTLNDSSVPSETKSRQRSHSSI, and ETIVKESGKQPGAKPKVKLARKKDEDKKKA. Composition is skewed to low complexity over residues 629-647 and 1105-1116; these read GSTSSETETASTVGSEETV and SDSGCSQSSAGD. 2 stretches are compositionally biased toward polar residues: residues 1166-1180 and 1234-1252; these read SVTSELEIESLQTKS and SPCISGTAQTLNDSSVPSE. Phosphoserine is present on serine 1261.

Belongs to the DOP1 family.

Its subcellular location is the golgi apparatus membrane. Its function is as follows. May be involved in protein traffic between late Golgi and early endosomes. This chain is Protein DOP1A (Dop1a), found in Mus musculus (Mouse).